A 107-amino-acid polypeptide reads, in one-letter code: Ferredoxin (107 aa).

2 consecutive 4Fe-4S ferredoxin-type domains span residues Thr2 to Glu30 and Phe31 to Pro60. [3Fe-4S] cluster contacts are provided by Cys9 and Cys17. Residues Cys21, Cys40, Cys43, and Cys46 each coordinate [4Fe-4S] cluster. Cys50 serves as a coordination point for [3Fe-4S] cluster.

It depends on [4Fe-4S] cluster as a cofactor. The cofactor is [3Fe-4S] cluster.

Its function is as follows. Ferredoxins are iron-sulfur proteins that transfer electrons in a wide variety of metabolic reactions. The polypeptide is Ferredoxin (fdxA) (Rickettsia bellii (strain RML369-C)).